The sequence spans 116 residues: Cyclin-dependent protein kinase inhibitor SMR9 (116 aa).

Residues methionine 1–phenylalanine 22 are compositionally biased toward basic residues. The tract at residues methionine 1–threonine 62 is disordered. Over residues valine 35–alanine 56 the composition is skewed to low complexity.

Functionally, probable cyclin-dependent protein kinase (CDK) inhibitor that functions as a repressor of mitosis in the endoreduplication cell cycle. In Arabidopsis thaliana (Mouse-ear cress), this protein is Cyclin-dependent protein kinase inhibitor SMR9.